The following is a 90-amino-acid chain: Evasin P1126 (90 aa).

Positions 1 to 25 (MTSHSAVRIAIFAVIALHSIFECLS) are cleaved as a signal peptide. 3 disulfides stabilise this stretch: Cys46/Cys62, Cys50/Cys64, and Cys58/Cys75. Asn55 is a glycosylation site (N-linked (GlcNAc...) asparagine). Asn77 is a glycosylation site (N-linked (GlcNAc...) asparagine).

The protein localises to the secreted. In terms of biological role, salivary chemokine-binding protein which binds to host chemokines CXCL1, CXCL2, CXCL3, CXCL4, CXCL5, CXCL6, CXCL7, CXCL10 and CXCL11. The polypeptide is Evasin P1126 (Amblyomma cajennense (Cayenne tick)).